Consider the following 305-residue polypeptide: MSQFEKTPGWLDWYANPSKPQFKLPAGAVDAHCHVFGPGNEFPFAPERKYTPCDASKAQLYALRDHLGFARNVVVQATCHGADNRAMVDACKSSGGKARGVATVKRSISDAELQQLHDAGVRGVRFNFVKRLVDFTPKDELMEIAGRIAKLGWHVVIYFEAVDLPELWDFFTALPTTVVVDHMGRPDVTKGVDSEEFALFLKFMREHQNVWSKVSCPERLSVTGPKALNGEQNAYRDVVPFARRVVEEFPDRVLWGTDWPHPNLKDHMPDDGLLVDFIPHIAPTAELQQKLLVDNPMRLYWPEEV.

Substrate-binding positions include 32–34, Tyr50, Thr78, Arg125, Arg131, Tyr158, and His182; that span reads HCH. Asp258 acts as the Proton acceptor in catalysis. Residue Asn263 coordinates substrate.

It belongs to the metallo-dependent hydrolases superfamily. PDC hydrolase family.

The catalysed reaction is 2-oxo-2H-pyran-4,6-dicarboxylate + H2O = (1E)-4-oxobut-1-ene-1,2,4-tricarboxylate + H(+). Its activity is regulated as follows. Strongly inhibited by 1 mM Zn(2+), Cu(2+), Mn(2+) and Co(2+) ions. Also inhibited by 5,5'-dithiobis(2-nitrobenzoic acid) (Ellman reagent) in vitro. In terms of biological role, involved in the degradation of aromatic compounds via the protocatechuate 4,5-cleavage pathway. Catalyzes the hydrolysis of 2-pyrone-4,6-dicarboxylate (PDC) to oxalomesaconate (OMA). Also catalyzes the reverse reaction. This is 2-pyrone-4,6-dicarbaxylate hydrolase from Comamonas testosteroni (Pseudomonas testosteroni).